We begin with the raw amino-acid sequence, 680 residues long: Trehalase (680 aa).

The interval 1–27 is disordered; it reads MVLHAQPPDQSTETAREAKALAGATDG.

This sequence belongs to the glycosyl hydrolase 15 family. In terms of assembly, homomultimer. Phosphate is required as a cofactor.

It carries out the reaction alpha,alpha-trehalose + H2O = alpha-D-glucose + beta-D-glucose. The protein operates within glycan degradation; trehalose degradation; D-glucose from alpha,alpha-trehalose: step 1/1. In terms of biological role, catalyzes the hydrolysis of alpha,alpha-trehalose into two molecules of D-glucose. The sequence is that of Trehalase from Mycobacterium tuberculosis (strain ATCC 25618 / H37Rv).